Here is a 354-residue protein sequence, read N- to C-terminus: Probable DNA repair protein RAD51 homolog 4 (354 aa).

An ATP-binding site is contributed by 115–122 (GNTSCGKT).

This sequence belongs to the RecA family. RAD51 subfamily.

It localises to the nucleus. In terms of biological role, involved in the homologous recombination repair (HRR) pathway of double-stranded DNA breaks arising during DNA replication or induced by DNA-damaging agents. In Dictyostelium discoideum (Social amoeba), this protein is Probable DNA repair protein RAD51 homolog 4 (rad51d).